The primary structure comprises 473 residues: Ribosomal RNA small subunit methyltransferase F (473 aa).

S-adenosyl-L-methionine-binding positions include A124–K130, E148, D175, and D193. Catalysis depends on C246, which acts as the Nucleophile.

This sequence belongs to the class I-like SAM-binding methyltransferase superfamily. RsmB/NOP family.

It localises to the cytoplasm. The catalysed reaction is cytidine(1407) in 16S rRNA + S-adenosyl-L-methionine = 5-methylcytidine(1407) in 16S rRNA + S-adenosyl-L-homocysteine + H(+). Its function is as follows. Specifically methylates the cytosine at position 1407 (m5C1407) of 16S rRNA. The chain is Ribosomal RNA small subunit methyltransferase F from Aliivibrio fischeri (strain ATCC 700601 / ES114) (Vibrio fischeri).